A 135-amino-acid polypeptide reads, in one-letter code: Lactoylglutathione lyase (135 aa).

The VOC domain maps to 2-126 (RLLHTMLRVG…DGYKIELIEE (125 aa)). Histidine 5 provides a ligand contact to Ni(2+). Substrate is bound at residue arginine 9. Glutamate 56 serves as a coordination point for Ni(2+). Substrate contacts are provided by asparagine 60 and histidine 74. Histidine 74 and glutamate 122 together coordinate Ni(2+). Catalysis depends on glutamate 122, which acts as the Proton donor/acceptor.

The protein belongs to the glyoxalase I family. In terms of assembly, homodimer. Requires Ni(2+) as cofactor.

The enzyme catalyses (R)-S-lactoylglutathione = methylglyoxal + glutathione. It participates in secondary metabolite metabolism; methylglyoxal degradation; (R)-lactate from methylglyoxal: step 1/2. Its function is as follows. Catalyzes the conversion of hemimercaptal, formed from methylglyoxal and glutathione, to S-lactoylglutathione. This Escherichia coli O157:H7 protein is Lactoylglutathione lyase (gloA).